A 69-amino-acid polypeptide reads, in one-letter code: Beta-defensin 11 (69 aa).

A signal peptide spans 1–23; sequence MRTLCSLLLIGCLLFSYDTPVVG. 3 cysteine pairs are disulfide-bonded: Cys35–Cys64, Cys42–Cys57, and Cys47–Cys65.

This sequence belongs to the beta-defensin family.

Its subcellular location is the secreted. Functionally, has antibacterial activity. The sequence is that of Beta-defensin 11 (Defb11) from Rattus norvegicus (Rat).